Here is a 378-residue protein sequence, read N- to C-terminus: Ribosomal RNA large subunit methyltransferase G (378 aa).

The protein belongs to the methyltransferase superfamily. RlmG family.

It localises to the cytoplasm. The enzyme catalyses guanosine(1835) in 23S rRNA + S-adenosyl-L-methionine = N(2)-methylguanosine(1835) in 23S rRNA + S-adenosyl-L-homocysteine + H(+). In terms of biological role, specifically methylates the guanine in position 1835 (m2G1835) of 23S rRNA. In Shewanella baltica (strain OS185), this protein is Ribosomal RNA large subunit methyltransferase G.